The following is a 353-amino-acid chain: UDP-N-acetylglucosamine--N-acetylmuramyl-(pentapeptide) pyrophosphoryl-undecaprenol N-acetylglucosamine transferase (353 aa).

UDP-N-acetyl-alpha-D-glucosamine contacts are provided by residues 10–12, asparagine 124, serine 183, and glutamine 283; that span reads TGG.

This sequence belongs to the glycosyltransferase 28 family. MurG subfamily.

The protein resides in the cell inner membrane. It carries out the reaction di-trans,octa-cis-undecaprenyl diphospho-N-acetyl-alpha-D-muramoyl-L-alanyl-D-glutamyl-meso-2,6-diaminopimeloyl-D-alanyl-D-alanine + UDP-N-acetyl-alpha-D-glucosamine = di-trans,octa-cis-undecaprenyl diphospho-[N-acetyl-alpha-D-glucosaminyl-(1-&gt;4)]-N-acetyl-alpha-D-muramoyl-L-alanyl-D-glutamyl-meso-2,6-diaminopimeloyl-D-alanyl-D-alanine + UDP + H(+). Its pathway is cell wall biogenesis; peptidoglycan biosynthesis. Cell wall formation. Catalyzes the transfer of a GlcNAc subunit on undecaprenyl-pyrophosphoryl-MurNAc-pentapeptide (lipid intermediate I) to form undecaprenyl-pyrophosphoryl-MurNAc-(pentapeptide)GlcNAc (lipid intermediate II). This Helicobacter pylori (strain P12) protein is UDP-N-acetylglucosamine--N-acetylmuramyl-(pentapeptide) pyrophosphoryl-undecaprenol N-acetylglucosamine transferase.